We begin with the raw amino-acid sequence, 393 residues long: Riboflavin biosynthesis protein RibBA (393 aa).

The tract at residues 1 to 200 is DHBP synthase; the sequence is MQFDTIELAI…IKSLVAFRKA (200 aa). Residues 27–28, Asp32, 139–143, and Glu163 contribute to the D-ribulose 5-phosphate site; these read RE and RNGHT. A Mg(2+)-binding site is contributed by Glu28. Position 142 (His142) interacts with Mg(2+). The interval 201-393 is GTP cyclohydrolase II; sequence VELNVNLKAK…TKKNKMGHLI (193 aa). 249 to 253 provides a ligand contact to GTP; the sequence is RMHSA. Residues Cys254, Cys265, and Cys267 each contribute to the Zn(2+) site. GTP contacts are provided by residues Gln270, 291 to 293, and Thr313; that span reads EGR. Residue Asp325 is the Proton acceptor; for GTP cyclohydrolase activity of the active site. Arg327 acts as the Nucleophile; for GTP cyclohydrolase activity in catalysis. GTP contacts are provided by Ser348 and Lys353.

In the N-terminal section; belongs to the DHBP synthase family. This sequence in the C-terminal section; belongs to the GTP cyclohydrolase II family. Requires Mg(2+) as cofactor. The cofactor is Mn(2+). Zn(2+) is required as a cofactor.

It catalyses the reaction D-ribulose 5-phosphate = (2S)-2-hydroxy-3-oxobutyl phosphate + formate + H(+). It carries out the reaction GTP + 4 H2O = 2,5-diamino-6-hydroxy-4-(5-phosphoribosylamino)-pyrimidine + formate + 2 phosphate + 3 H(+). Its pathway is cofactor biosynthesis; riboflavin biosynthesis; 2-hydroxy-3-oxobutyl phosphate from D-ribulose 5-phosphate: step 1/1. It functions in the pathway cofactor biosynthesis; riboflavin biosynthesis; 5-amino-6-(D-ribitylamino)uracil from GTP: step 1/4. In terms of biological role, catalyzes the conversion of D-ribulose 5-phosphate to formate and 3,4-dihydroxy-2-butanone 4-phosphate. Catalyzes the conversion of GTP to 2,5-diamino-6-ribosylamino-4(3H)-pyrimidinone 5'-phosphate (DARP), formate and pyrophosphate. This Staphylococcus epidermidis (strain ATCC 12228 / FDA PCI 1200) protein is Riboflavin biosynthesis protein RibBA.